The following is a 524-amino-acid chain: Thioredoxin reductase 2, mitochondrial (524 aa).

Residues 1-34 (MVAAMVAALRGPSRRFRPRTRALTRGTRGAASAA) constitute a mitochondrion transit peptide. 41-70 (DLLVIGGGSGGLACAKEAAQLGKKVAVADY) is a binding site for FAD. The residue at position 79 (lysine 79) is an N6-succinyllysine. A disulfide bridge connects residues cysteine 86 and cysteine 91. 2 positions are modified to N6-succinyllysine: lysine 175 and lysine 329. Residue histidine 497 is the Proton acceptor of the active site. The cysteinyl-selenocysteine (Cys-Sec) cross-link spans 522-523 (CU). Position 523 (selenocysteine 523) is a non-standard amino acid, selenocysteine.

It belongs to the class-I pyridine nucleotide-disulfide oxidoreductase family. Homodimer. It depends on FAD as a cofactor. As to expression, expressed in liver, heart, testis and kidney.

It localises to the mitochondrion. The catalysed reaction is [thioredoxin]-dithiol + NADP(+) = [thioredoxin]-disulfide + NADPH + H(+). In terms of biological role, involved in the control of reactive oxygen species levels and the regulation of mitochondrial redox homeostasis. Maintains thioredoxin in a reduced state. May play a role in redox-regulated cell signaling. The chain is Thioredoxin reductase 2, mitochondrial from Mus musculus (Mouse).